A 58-amino-acid polypeptide reads, in one-letter code: MIKHFHFNKLSSGKKNNVPSPAKGVIQIKKSASQLTKGGAGHVPEYFVGIGTPISFYG.

Residues 1–37 constitute a propeptide that is removed on maturation; it reads MIKHFHFNKLSSGKKNNVPSPAKGVIQIKKSASQLTK. Residues 38–45 constitute a cross-link (isoglutamyl glycine isopeptide (Gly-Glu)); it reads GGAGHVPE.

Its subcellular location is the secreted. In terms of biological role, peptide antibiotic that functions through inhibition of the bacterial DNA-dependent RNA polymerase (RNAP). Inhibits transcription by binding deep within RNAP secondary channel, where it sterically blocks the folding of the trigger loop, which is essential for efficient catalysis. In addition, it also seems to restrict access of nucleotide substrates to the catalytic center, and shows a partially competitive mode of inhibition with them. Exhibits potent bacteriocidal activity against a range of Enterobacteriaceae, including several pathogenic E.coli, Salmonella and Shigella strains. Also acts on the cytoplasmic membrane of Salmonella newport, producing alteration of membrane permeability and disruption of the subsequent gradient dissipation, which inhibits several processes essential for cell viability, such as oxygen consumption. Induces bacterial filamentation in susceptible cells in a non-SOS-dependent way, but this phenotype may result from impaired transcription of genes coding for cell division proteins. This chain is Microcin J25 (mcjA), found in Escherichia coli.